A 69-amino-acid polypeptide reads, in one-letter code: Toxin Tma3 (69 aa).

Residues 2-66 (KDDYPVDTAK…SPTKKSGRCN (65 aa)) enclose the LCN-type CS-alpha/beta domain. Intrachain disulfides connect Cys-14–Cys-65, Cys-18–Cys-41, Cys-27–Cys-48, and Cys-31–Cys-50.

It belongs to the long (4 C-C) scorpion toxin superfamily. Sodium channel inhibitor family. In terms of tissue distribution, expressed by the venom gland.

The protein resides in the secreted. Functionally, inhibits voltage-gated sodium channels (Nav). This toxin shows insect lethality against crickets. This Tityus macrochirus (Scorpion) protein is Toxin Tma3.